A 335-amino-acid chain; its full sequence is Glutamyl-tRNA reductase (335 aa).

Substrate contacts are provided by residues 60–63, S110, 115–117, and Q121; these read TCHR and ETE. Residue C61 is the Nucleophile of the active site. Residue 189–194 coordinates NADP(+); that stretch reads GYSEIN.

The protein belongs to the glutamyl-tRNA reductase family. In terms of assembly, homodimer.

The enzyme catalyses (S)-4-amino-5-oxopentanoate + tRNA(Glu) + NADP(+) = L-glutamyl-tRNA(Glu) + NADPH + H(+). It participates in porphyrin-containing compound metabolism; protoporphyrin-IX biosynthesis; 5-aminolevulinate from L-glutamyl-tRNA(Glu): step 1/2. Catalyzes the NADPH-dependent reduction of glutamyl-tRNA(Glu) to glutamate 1-semialdehyde (GSA). This chain is Glutamyl-tRNA reductase, found in Chlamydia trachomatis serovar L2 (strain ATCC VR-902B / DSM 19102 / 434/Bu).